The primary structure comprises 122 residues: Large ribosomal subunit protein uL14 (122 aa).

The protein belongs to the universal ribosomal protein uL14 family. Part of the 50S ribosomal subunit. Forms a cluster with proteins L3 and L19. In the 70S ribosome, L14 and L19 interact and together make contacts with the 16S rRNA in bridges B5 and B8.

Functionally, binds to 23S rRNA. Forms part of two intersubunit bridges in the 70S ribosome. The protein is Large ribosomal subunit protein uL14 of Streptococcus equi subsp. equi (strain 4047).